The sequence spans 1049 residues: Dyslexia-associated protein KIAA0319-like protein (1049 aa).

Residues 1 to 29 (MEKRLGVKPNPASWILSGYYWQTSAKWLR) are Cytoplasmic-facing. A helical transmembrane segment spans residues 30–50 (SLYLFYTCFCFSVLWLSTDAS). An MANSC domain is found at 49 to 127 (ASESRCQQGK…AFRTHSSNSM (79 aa)). At 51-932 (ESRCQQGKTQ…DSNCEWSVLY (882 aa)) the chain is on the extracellular side. N-linked (GlcNAc...) asparagine glycans are attached at residues Asn-247, Asn-395, Asn-472, Asn-487, and Asn-525. 5 consecutive PKD domains span residues 312 to 401 (SAGE…VKPE), 409 to 498 (IAIV…VNKA), 504 to 594 (VANA…VQPE), 600 to 688 (QADA…VKEE), and 694 to 785 (IAKI…VKPD). The chain crosses the membrane as a helical span at residues 933–953 (VIIATFVIVVALGILSWTVIC). The Cytoplasmic segment spans residues 954–1049 (CCKRQKGKPK…KARSPREEIL (96 aa)). Residue Thr-974 is modified to Phosphothreonine. A phosphoserine mark is found at Ser-978, Ser-1009, and Ser-1031. Residues 1022 to 1049 (GKLLHGQNGSVPNGQTPLKARSPREEIL) form a disordered region. Positions 1028–1037 (QNGSVPNGQT) are enriched in polar residues. Thr-1037 carries the phosphothreonine modification.

Interacts with RTN4R. In terms of assembly, (Microbial infection) Interacts with AAV-2 VP1. In terms of processing, N-glycosylated. In terms of tissue distribution, expressed in cortical neurons in the brain cortex (at protein level).

It localises to the cytoplasmic granule membrane. The protein resides in the golgi apparatus membrane. Its subcellular location is the golgi apparatus. It is found in the trans-Golgi network membrane. The protein localises to the cell membrane. In terms of biological role, possible role in axon guidance through interaction with RTN4R. (Microbial infection) Acts as a receptor for adeno-associated virus and is involved in adeno-associated virus infection through endocytosis system. The polypeptide is Dyslexia-associated protein KIAA0319-like protein (Homo sapiens (Human)).